Here is a 271-residue protein sequence, read N- to C-terminus: Putative hydro-lyase jk0403 (271 aa).

This sequence belongs to the D-glutamate cyclase family.

The protein is Putative hydro-lyase jk0403 of Corynebacterium jeikeium (strain K411).